Here is a 244-residue protein sequence, read N- to C-terminus: Adenosine 5'-phosphosulfate reductase (244 aa).

Residues C129, C130, C212, and C215 each coordinate [4Fe-4S] cluster. The Nucleophile; cysteine thiosulfonate intermediate role is filled by C240.

This sequence belongs to the PAPS reductase family. CysH subfamily. The cofactor is [4Fe-4S] cluster.

The protein resides in the cytoplasm. It carries out the reaction [thioredoxin]-disulfide + sulfite + AMP + 2 H(+) = adenosine 5'-phosphosulfate + [thioredoxin]-dithiol. It functions in the pathway sulfur metabolism; hydrogen sulfide biosynthesis; sulfite from sulfate. Catalyzes the formation of sulfite from adenosine 5'-phosphosulfate (APS) using thioredoxin as an electron donor. The polypeptide is Adenosine 5'-phosphosulfate reductase (Neisseria meningitidis serogroup A / serotype 4A (strain DSM 15465 / Z2491)).